A 180-amino-acid polypeptide reads, in one-letter code: MSRIGRLPIPVPKGVQVQVSPGLVKVKGPKGELSVPVSPELKVVVEENVVRVERPSDERRHRSLHGLTRTLIANAVKGVSEGYVKELLIKGIGYRARLVGRSIELTVGFSHPVVVEPPEGITFEVPEPTRIRVLGIDKQKVGQVAADIRAIKKPSAYHEKGIYYADEPVRLKPGKAGAKK.

This sequence belongs to the universal ribosomal protein uL6 family. As to quaternary structure, part of the 50S ribosomal subunit.

Functionally, this protein binds to the 23S rRNA, and is important in its secondary structure. It is located near the subunit interface in the base of the L7/L12 stalk, and near the tRNA binding site of the peptidyltransferase center. The chain is Large ribosomal subunit protein uL6 from Thermus aquaticus.